A 592-amino-acid chain; its full sequence is Aspartate--tRNA ligase (592 aa).

An L-aspartate-binding site is contributed by Glu-171. The aspartate stretch occupies residues 195–198 (QLFK). Arg-217 contacts L-aspartate. ATP is bound by residues 217–219 (RDE) and Gln-226. His-448 is a binding site for L-aspartate. Residue Glu-482 participates in ATP binding. An L-aspartate-binding site is contributed by Arg-489. 534–537 (GLDR) contributes to the ATP binding site.

The protein belongs to the class-II aminoacyl-tRNA synthetase family. Type 1 subfamily. As to quaternary structure, homodimer.

The protein resides in the cytoplasm. It catalyses the reaction tRNA(Asp) + L-aspartate + ATP = L-aspartyl-tRNA(Asp) + AMP + diphosphate. Functionally, catalyzes the attachment of L-aspartate to tRNA(Asp) in a two-step reaction: L-aspartate is first activated by ATP to form Asp-AMP and then transferred to the acceptor end of tRNA(Asp). The polypeptide is Aspartate--tRNA ligase (Vibrio vulnificus (strain CMCP6)).